Reading from the N-terminus, the 130-residue chain is MSNVEYKGLGRRKSSVAHVKLVPGTGKILINQRKPNEYFPNSLVIQDMEQPLVITDTRKNFDVFVKVVGGGFTGQAGAIRLGIARALLVANNDFRKTLKVSKMLTRDPRAKERKKYGLYGARRSPQFTKR.

The disordered stretch occupies residues 109-130; it reads RAKERKKYGLYGARRSPQFTKR.

It belongs to the universal ribosomal protein uS9 family.

The polypeptide is Small ribosomal subunit protein uS9 (Malacoplasma penetrans (strain HF-2) (Mycoplasma penetrans)).